We begin with the raw amino-acid sequence, 179 residues long: Interleukin-22b (179 aa).

A signal peptide spans 1–33; sequence MAVLQKSMSFSLMGTLAASCLLLIALWAQEANA. Disulfide bonds link Cys-40–Cys-132 and Cys-89–Cys-178. N-linked (GlcNAc...) asparagine glycans are attached at residues Asn-54, Asn-68, and Asn-97.

This sequence belongs to the IL-10 family.

It is found in the secreted. Its function is as follows. Cytokine that contributes to the inflammatory response in vivo. The chain is Interleukin-22b from Mus musculus (Mouse).